We begin with the raw amino-acid sequence, 271 residues long: MSRIQSTFAALAAQGKKGLIPFMTAGDPDPARTVEFMHALAKGGADVIELGVPFSDPMADGPVIQQSSERALAKGVSLRHVLADVKRFRESDDKTPVVLMGYANPIERMGADAFAAAAKDAGVDGVLVVDYPPEESANFAETMKAAGIDPIFLLAPTSTDERIAEVGKIASGYVYYVSLKGVTGAANLDVLSIAGKIPAIKSRVPLPVGVGFGIRDAQSARAVAEVSDAVVIGSRIVQLLEEAAPQSAAGKLTNFIKEIRQALDSIGATAG.

Catalysis depends on proton acceptor residues glutamate 49 and aspartate 60.

Belongs to the TrpA family. In terms of assembly, tetramer of two alpha and two beta chains.

The enzyme catalyses (1S,2R)-1-C-(indol-3-yl)glycerol 3-phosphate + L-serine = D-glyceraldehyde 3-phosphate + L-tryptophan + H2O. Its pathway is amino-acid biosynthesis; L-tryptophan biosynthesis; L-tryptophan from chorismate: step 5/5. Its function is as follows. The alpha subunit is responsible for the aldol cleavage of indoleglycerol phosphate to indole and glyceraldehyde 3-phosphate. The polypeptide is Tryptophan synthase alpha chain (Paraburkholderia phymatum (strain DSM 17167 / CIP 108236 / LMG 21445 / STM815) (Burkholderia phymatum)).